Consider the following 341-residue polypeptide: ATPase GET3 (341 aa).

34–41 provides a ligand contact to ATP; sequence KGGVGKTT. Residue Asp-63 is part of the active site. Glu-245 and Asn-272 together coordinate ATP. Residues Cys-283 and Cys-286 each coordinate Zn(2+).

The protein belongs to the arsA ATPase family. In terms of assembly, homodimer.

The protein localises to the cytoplasm. The protein resides in the endoplasmic reticulum. In terms of biological role, ATPase required for the post-translational delivery of tail-anchored (TA) proteins to the endoplasmic reticulum. Recognizes and selectively binds the transmembrane domain of TA proteins in the cytosol. This complex then targets to the endoplasmic reticulum by membrane-bound receptors, where the tail-anchored protein is released for insertion. This process is regulated by ATP binding and hydrolysis. ATP binding drives the homodimer towards the closed dimer state, facilitating recognition of newly synthesized TA membrane proteins. ATP hydrolysis is required for insertion. Subsequently, the homodimer reverts towards the open dimer state, lowering its affinity for the membrane-bound receptor, and returning it to the cytosol to initiate a new round of targeting. The chain is ATPase GET3 from Paracoccidioides lutzii (strain ATCC MYA-826 / Pb01) (Paracoccidioides brasiliensis).